We begin with the raw amino-acid sequence, 793 residues long: Phenylalanine--tRNA ligase beta subunit (793 aa).

Residues 39-148 enclose the tRNA-binding domain; the sequence is AKPFTGVVVG…EDAPVGLNIR (110 aa). The B5 domain maps to 400 to 476; sequence PKREAIELNQ…RIHGYDNIQI (77 aa). Positions 454, 460, 463, and 464 each coordinate Mg(2+). The FDX-ACB domain occupies 698–791; the sequence is SRFPSVRRDI…LENTYQATLR (94 aa).

It belongs to the phenylalanyl-tRNA synthetase beta subunit family. Type 1 subfamily. In terms of assembly, tetramer of two alpha and two beta subunits. Requires Mg(2+) as cofactor.

It localises to the cytoplasm. The catalysed reaction is tRNA(Phe) + L-phenylalanine + ATP = L-phenylalanyl-tRNA(Phe) + AMP + diphosphate + H(+). The polypeptide is Phenylalanine--tRNA ligase beta subunit (Acinetobacter baylyi (strain ATCC 33305 / BD413 / ADP1)).